Consider the following 219-residue polypeptide: Cytidylate kinase (219 aa).

21–29 is a binding site for ATP; that stretch reads GPAASGKGT.

It belongs to the cytidylate kinase family. Type 1 subfamily.

It localises to the cytoplasm. The catalysed reaction is CMP + ATP = CDP + ADP. The enzyme catalyses dCMP + ATP = dCDP + ADP. The polypeptide is Cytidylate kinase (Rickettsia felis (strain ATCC VR-1525 / URRWXCal2) (Rickettsia azadi)).